Reading from the N-terminus, the 286-residue chain is Lipoyl synthase (286 aa).

[4Fe-4S] cluster is bound by residues cysteine 29, cysteine 34, cysteine 40, cysteine 55, cysteine 59, cysteine 62, and serine 265. The region spanning tryptophan 41 to serine 254 is the Radical SAM core domain.

Belongs to the radical SAM superfamily. Lipoyl synthase family. [4Fe-4S] cluster serves as cofactor.

The protein localises to the cytoplasm. It catalyses the reaction [[Fe-S] cluster scaffold protein carrying a second [4Fe-4S](2+) cluster] + N(6)-octanoyl-L-lysyl-[protein] + 2 oxidized [2Fe-2S]-[ferredoxin] + 2 S-adenosyl-L-methionine + 4 H(+) = [[Fe-S] cluster scaffold protein] + N(6)-[(R)-dihydrolipoyl]-L-lysyl-[protein] + 4 Fe(3+) + 2 hydrogen sulfide + 2 5'-deoxyadenosine + 2 L-methionine + 2 reduced [2Fe-2S]-[ferredoxin]. It participates in protein modification; protein lipoylation via endogenous pathway; protein N(6)-(lipoyl)lysine from octanoyl-[acyl-carrier-protein]: step 2/2. Catalyzes the radical-mediated insertion of two sulfur atoms into the C-6 and C-8 positions of the octanoyl moiety bound to the lipoyl domains of lipoate-dependent enzymes, thereby converting the octanoylated domains into lipoylated derivatives. This chain is Lipoyl synthase, found in Sulfolobus acidocaldarius (strain ATCC 33909 / DSM 639 / JCM 8929 / NBRC 15157 / NCIMB 11770).